We begin with the raw amino-acid sequence, 400 residues long: Peptidase M20 domain-containing protein C757.05c (400 aa).

The signal sequence occupies residues methionine 1 to alanine 25. An N-linked (GlcNAc...) asparagine glycan is attached at asparagine 80. Position 152 (aspartate 152) interacts with Zn(2+). Glutamate 186 functions as the Proton acceptor in the catalytic mechanism. Position 187 (glutamate 187) interacts with Zn(2+).

It belongs to the peptidase M20A family. Requires Zn(2+) as cofactor.

The protein localises to the secreted. The sequence is that of Peptidase M20 domain-containing protein C757.05c from Schizosaccharomyces pombe (strain 972 / ATCC 24843) (Fission yeast).